A 373-amino-acid polypeptide reads, in one-letter code: MNFEIYNEEIDHKLEAYDYCLDESLIAGKPSKVRHESRLMIVRDSSLKEDYSTNKYTKDLLAELREGDLVVINDTKVMKARLKVELENGQLVELLVLEKSDQSTWLCLAKPAKKLKINKQLNLKSPFAKDIKLKISGIDDETGGRFIKFPENINDLISMNKLLDIFGEIPIPPYIKSSEEESFHENSYQTEYACNPGAVAAPTAGLHLSKSLISNLKKKGILVMPITLHVGYGTFKPIDQEDLSDLKLHKEWVSVSKKVVEEIKRIKKTDRRVIAIGTTSVRALESCYSYAMKDFIPIAKYVDLVIKPGYKFKAVDGLLTNFHLPKSSLLLLVSAMIGRERLLDLYKKATKEKFRFFSYGDAMYISPDSFLEK.

Belongs to the QueA family. In terms of assembly, monomer.

It localises to the cytoplasm. The enzyme catalyses 7-aminomethyl-7-carbaguanosine(34) in tRNA + S-adenosyl-L-methionine = epoxyqueuosine(34) in tRNA + adenine + L-methionine + 2 H(+). It participates in tRNA modification; tRNA-queuosine biosynthesis. Transfers and isomerizes the ribose moiety from AdoMet to the 7-aminomethyl group of 7-deazaguanine (preQ1-tRNA) to give epoxyqueuosine (oQ-tRNA). This Prochlorococcus marinus (strain MIT 9515) protein is S-adenosylmethionine:tRNA ribosyltransferase-isomerase.